A 67-amino-acid chain; its full sequence is Guanine nucleotide-binding protein G(I)/G(S)/G(O) subunit gamma-13 (67 aa).

Position 64 is a cysteine methyl ester (C64). C64 is lipidated: S-farnesyl cysteine. Residues 65 to 67 constitute a propeptide, removed in mature form; that stretch reads TIL.

Belongs to the G protein gamma family. As to quaternary structure, g proteins are composed of 3 units, alpha, beta and gamma.

The protein resides in the cell membrane. Functionally, guanine nucleotide-binding proteins (G proteins) are involved as a modulator or transducer in various transmembrane signaling systems. The beta and gamma chains are required for the GTPase activity, for replacement of GDP by GTP, and for G protein-effector interaction. This is Guanine nucleotide-binding protein G(I)/G(S)/G(O) subunit gamma-13 (GNG13) from Homo sapiens (Human).